A 557-amino-acid chain; its full sequence is Hdr-like menaquinol oxidoreductase iron-sulfur subunit (557 aa).

2 consecutive 4Fe-4S ferredoxin-type domains span residues 86–115 (RAFK…GDPK) and 155–184 (KEWY…AEVV). [4Fe-4S] cluster contacts are provided by C95, C98, C101, C105, C164, C167, C170, and C174.

It depends on [4Fe-4S] cluster as a cofactor.

It is found in the membrane. Has menaquinol-oxidizing activity. The HmeC and HmeD subunits may together mediate electron transfer from menaquinol to an unidentified electron acceptor on the cytoplasmic side of the membrane. This Archaeoglobus profundus (strain DSM 5631 / JCM 9629 / NBRC 100127 / Av18) protein is Hdr-like menaquinol oxidoreductase iron-sulfur subunit (hmeD).